The following is a 431-amino-acid chain: Histidinol dehydrogenase (431 aa).

Residues tyrosine 131, glutamine 193, and asparagine 216 each contribute to the NAD(+) site. Substrate-binding residues include serine 239, glutamine 261, and histidine 264. Residues glutamine 261 and histidine 264 each contribute to the Zn(2+) site. Active-site proton acceptor residues include glutamate 329 and histidine 330. Positions 330, 363, 417, and 422 each coordinate substrate. Aspartate 363 serves as a coordination point for Zn(2+). Histidine 422 lines the Zn(2+) pocket.

This sequence belongs to the histidinol dehydrogenase family. Zn(2+) is required as a cofactor.

The catalysed reaction is L-histidinol + 2 NAD(+) + H2O = L-histidine + 2 NADH + 3 H(+). It functions in the pathway amino-acid biosynthesis; L-histidine biosynthesis; L-histidine from 5-phospho-alpha-D-ribose 1-diphosphate: step 9/9. Its function is as follows. Catalyzes the sequential NAD-dependent oxidations of L-histidinol to L-histidinaldehyde and then to L-histidine. The sequence is that of Histidinol dehydrogenase from Clostridium acetobutylicum (strain ATCC 824 / DSM 792 / JCM 1419 / IAM 19013 / LMG 5710 / NBRC 13948 / NRRL B-527 / VKM B-1787 / 2291 / W).